A 533-amino-acid polypeptide reads, in one-letter code: GMP synthase [glutamine-hydrolyzing] (533 aa).

One can recognise a Glutamine amidotransferase type-1 domain in the interval 25-215 (SIVIFDFGSQ…VFNICKCHAN (191 aa)). Cysteine 102 acts as the Nucleophile in catalysis. Active-site residues include histidine 189 and glutamate 191. Residues 216 to 408 (WTMGNYIQES…LGLPDEMIWR (193 aa)) form the GMPS ATP-PPase domain. 243–249 (SGGVDSA) is an ATP binding site.

As to quaternary structure, homodimer.

It carries out the reaction XMP + L-glutamine + ATP + H2O = GMP + L-glutamate + AMP + diphosphate + 2 H(+). The protein operates within purine metabolism; GMP biosynthesis; GMP from XMP (L-Gln route): step 1/1. Functionally, catalyzes the synthesis of GMP from XMP. This is GMP synthase [glutamine-hydrolyzing] from Dehalococcoides mccartyi (strain CBDB1).